Consider the following 1099-residue polypeptide: Mediator of RNA polymerase II transcription subunit 5 (1099 aa).

Positions 41–66 (DNDDAKTQEGSGSQDKTDVEESISKP) are disordered.

Belongs to the Mediator complex subunit 5 family. Component of the Mediator complex.

Its subcellular location is the nucleus. In terms of biological role, component of the Mediator complex, a coactivator involved in the regulated transcription of nearly all RNA polymerase II-dependent genes. Mediator functions as a bridge to convey information from gene-specific regulatory proteins to the basal RNA polymerase II transcription machinery. Mediator is recruited to promoters by direct interactions with regulatory proteins and serves as a scaffold for the assembly of a functional preinitiation complex with RNA polymerase II and the general transcription factors. This Candida glabrata (strain ATCC 2001 / BCRC 20586 / JCM 3761 / NBRC 0622 / NRRL Y-65 / CBS 138) (Yeast) protein is Mediator of RNA polymerase II transcription subunit 5 (NUT1).